Reading from the N-terminus, the 1314-residue chain is Ubinuclein-2 (1314 aa).

The interval 1-113 (MAEPRRVAFI…PPPRPPKETV (113 aa)) is disordered. A Phosphoserine modification is found at serine 13. Basic and acidic residues-rich tracts occupy residues 16–31 (RRRE…EPPR) and 55–67 (ARDK…EVSR). Pro residues predominate over residues 81–96 (PEPPPPPLPLQTPPPR). Threonine 229 carries the post-translational modification Phosphothreonine. At serine 236 the chain carries Phosphoserine. Positions 236 to 288 (SDTEEDDFTDNQKHKPPKVPKIKEDDIEVKKRKRKEEGEKEKKPRKKVPKQLG) are disordered. The residue at position 238 (threonine 238) is a Phosphothreonine. A Glycyl lysine isopeptide (Lys-Gly) (interchain with G-Cter in SUMO2) cross-link involves residue lysine 258. At serine 297 the chain carries Phosphoserine. Disordered regions lie at residues 322 to 345 (DALK…PKPP), 400 to 424 (ATSD…TFPS), 559 to 584 (LQAD…RVIG), 657 to 709 (LTSA…ASAS), 785 to 818 (ATPK…DLAH), 849 to 893 (GLQR…SLTQ), 948 to 975 (YRLP…APST), 1003 to 1185 (ASPK…GSSV), and 1288 to 1314 (PLPA…RKPQ). Positions 330–341 (PKVPVTPSSSSL) are enriched in low complexity. Phosphoserine is present on residues serine 402, serine 405, and serine 408. Polar residues predominate over residues 415-424 (GNTTHPTFPS). Basic and acidic residues-rich tracts occupy residues 560-570 (QADEEREKNGS) and 673-684 (KVKECSPKKDPK). At serine 570 the chain carries Phosphoserine. Residues 685-709 (APASVVASGGGPSTSSSTSIVASAS) are compositionally biased toward low complexity. Over residues 792–801 (STQTAHSSSL) the composition is skewed to polar residues. A compositionally biased stretch (low complexity) spans 849–879 (GLQRSSQIHASSSSQTHVSSSQAQAAASSHA). Over residues 883–893 (SEAQDASSLTQ) the composition is skewed to polar residues. Low complexity predominate over residues 1003 to 1013 (ASPKLAASPKP). Residues 1014–1028 (ATSPKPLPSPKPSVS) are compositionally biased toward pro residues. Residues 1029 to 1040 (PKPSLSAKPSIS) are compositionally biased toward low complexity. Position 1036 is an N6-acetyllysine (lysine 1036). Polar residues-rich tracts occupy residues 1057-1132 (PSSS…NSLS) and 1142-1153 (RGSNLNSSGANR). Phosphoserine is present on serine 1091. Lysine 1116 is modified (N6-acetyllysine). The span at 1305–1314 (GDTKLPRKPQ) shows a compositional bias: basic and acidic residues.

The protein belongs to the ubinuclein family.

This Mus musculus (Mouse) protein is Ubinuclein-2 (Ubn2).